The following is a 148-amino-acid chain: Leghemoglobin-1 (148 aa).

The Globin domain occupies 2–146 (GFTDKQEALV…LATAIKKAMK (145 aa)). Nitrated tyrosine occurs at positions 24 and 29. Serine 44 is a binding site for heme b. Serine 44 is subject to Phosphoserine. Histidine 61 provides a ligand contact to O2. The heme b site is built by histidine 93 and lysine 96. At tyrosine 134 the chain carries Nitrated tyrosine.

This sequence belongs to the plant globin family. Monomer. Post-translationally, nitrated in effective nodules and particularly in hypoxic conditions; this mechanism may play a protective role in the symbiosis by buffering toxic peroxynitrite NO(2)(-). Nitration level decrease during nodule senescence. In terms of processing, phosphorylation at Ser-44 disrupts the molecular environment of its porphyrin ring oxygen binding pocket, thus leading to a reduced oxygen consumption and to the delivery of oxygen O(2) to symbiosomes. Root nodules.

It is found in the cytoplasm. Its subcellular location is the cytosol. It localises to the nucleus. Its function is as follows. Leghemoglobin that reversibly binds oxygen O(2) through a pentacoordinated heme iron. In root nodules, facilitates the diffusion of oxygen to the bacteroids while preventing the bacterial nitrogenase from being inactivated by buffering dioxygen, nitric oxide and carbon monoxide, and promoting the formation of reactive oxygen species (ROS, e.g. H(2)O(2)). This role is essential for symbiotic nitrogen fixation (SNF). This Pisum sativum (Garden pea) protein is Leghemoglobin-1.